We begin with the raw amino-acid sequence, 394 residues long: Carbamoyltransferase HypF homolog (394 aa).

It belongs to the carbamoyltransferase HypF family.

This chain is Carbamoyltransferase HypF homolog (hypF1), found in Cupriavidus necator (strain ATCC 17699 / DSM 428 / KCTC 22496 / NCIMB 10442 / H16 / Stanier 337) (Ralstonia eutropha).